We begin with the raw amino-acid sequence, 192 residues long: MISISDTAQAHFCKLLEKQEPDTNIRVFVVNPGTPSAECGVSYCPPDAVESTDTTLEFNGFDAVVDAESAPFLSEAEIDFVTDQMGSQLTLKAPNAKARKVDDDAPLEERINYMIEAEINPQLASHGGKVMLMEITEKGEAILQFGGGCNGCSMVDVTLKDGIEKQMLAQFSGELTAVKDATEHEAGEHSYY.

[4Fe-4S] cluster is bound by residues Cys149 and Cys152.

Belongs to the NfuA family. In terms of assembly, homodimer. [4Fe-4S] cluster is required as a cofactor.

In terms of biological role, involved in iron-sulfur cluster biogenesis. Binds a 4Fe-4S cluster, can transfer this cluster to apoproteins, and thereby intervenes in the maturation of Fe/S proteins. Could also act as a scaffold/chaperone for damaged Fe/S proteins. This chain is Fe/S biogenesis protein NfuA, found in Pseudoalteromonas atlantica (strain T6c / ATCC BAA-1087).